The sequence spans 96 residues: Co-chaperonin GroES (96 aa).

Belongs to the GroES chaperonin family. Heptamer of 7 subunits arranged in a ring. Interacts with the chaperonin GroEL.

The protein resides in the cytoplasm. Its function is as follows. Together with the chaperonin GroEL, plays an essential role in assisting protein folding. The GroEL-GroES system forms a nano-cage that allows encapsulation of the non-native substrate proteins and provides a physical environment optimized to promote and accelerate protein folding. GroES binds to the apical surface of the GroEL ring, thereby capping the opening of the GroEL channel. The protein is Co-chaperonin GroES of Polynucleobacter necessarius subsp. necessarius (strain STIR1).